The chain runs to 349 residues: MDLFDKLKELHEEGLKQISKATDEKTLNEVRVELVGRKGELTKILHSMRDVAPENRREVGQKVNELRDLFNAQLDEAKENIVKAVLAKRLEEEKIDVTLPGREGHLGSKHPINIILDDLESYFIGMGYKVVQGPEIETDHYVFEMMNLPKDHPARDMQATFYINDENLLRSQTSGDQARVLEKHDFSKGPLKMVGPGKVYRRDDDDATHSHQFMQMEGLVIDKHVTMSDLKGTLEMIAKHVFGQDRATRLRPSYFPFTEPSVEMDVSCFNCDGKGCPICKYTGWIEVLGAGMVHPNVLENAGVDSNVYGGFAFGVGLDRFAILKYGIDDIRDFYTNDVRFLEQFRKEEK.

Glu259 serves as a coordination point for Mg(2+).

It belongs to the class-II aminoacyl-tRNA synthetase family. Phe-tRNA synthetase alpha subunit type 1 subfamily. Tetramer of two alpha and two beta subunits. The cofactor is Mg(2+).

The protein resides in the cytoplasm. The catalysed reaction is tRNA(Phe) + L-phenylalanine + ATP = L-phenylalanyl-tRNA(Phe) + AMP + diphosphate + H(+). The chain is Phenylalanine--tRNA ligase alpha subunit from Lactobacillus acidophilus (strain ATCC 700396 / NCK56 / N2 / NCFM).